The following is a 1836-amino-acid chain: InaD-like protein (1836 aa).

Residues 1 to 65 (MPENPAAEKM…SIKQLKGQLS (65 aa)) enclose the L27 domain. 3 consecutive PDZ domains span residues 134–221 (YIDI…AREV), 248–328 (DVEL…ARDP), and 365–453 (NVEL…VRRK). 3 positions are modified to phosphoserine: Ser455, Ser459, and Ser482. Over residues 456–466 (LSASPFEQPSS) the composition is skewed to polar residues. The interval 456–492 (LSASPFEQPSSREAVAEPPEVPELTGSLKPETNSRME) is disordered. The PDZ 4 domain occupies 555 to 641 (DEELQKYSKL…PFTLVCCRRL (87 aa)). Ser647 carries the post-translational modification Phosphoserine. PDZ domains follow at residues 687 to 773 (TVEL…ICKP) and 1074 to 1166 (PRIV…VVQS). The segment covering 1173–1191 (VIPSVNNKGKTPPQNQDQN) has biased composition (polar residues). Residues 1173-1232 (VIPSVNNKGKTPPQNQDQNTQEKKAKRHGTAPPPMKLPPPYRAPSADTEESEEDSALTDK) form a disordered region. A compositionally biased stretch (pro residues) spans 1203-1214 (APPPMKLPPPYR). Ser1217 is subject to Phosphoserine. Over residues 1219-1228 (DTEESEEDSA) the composition is skewed to acidic residues. A PDZ 7 domain is found at 1245–1328 (LHIIELEKDK…PTRVKLVFIR (84 aa)). The interval 1341–1448 (FPVPSHSPSP…ADVTGSGNFQ (108 aa)) is disordered. Residues 1372-1383 (PLPERESSKPED) are compositionally biased toward basic and acidic residues. Composition is skewed to polar residues over residues 1415–1426 (YSAQVSSSSQEI) and 1434–1448 (CQST…GNFQ). 2 PDZ domains span residues 1472-1555 (EMII…VIYR) and 1568-1650 (VFLV…EIGR). The residue at position 1545 (Thr1545) is a Phosphothreonine. The tract at residues 1657–1678 (ASSRKTSQNSQGDQHSAHSSCR) is disordered. The 87-residue stretch at 1709-1795 (PRTVEIIREL…FGRIILQVVA (87 aa)) folds into the PDZ 10 domain. Positions 1813–1836 (SQLGSPTADRHPQDPEELLQRTAD) are disordered.

As to quaternary structure, forms a ternary complex with PALS1 and CRB1. Component of a complex whose core is composed of ARHGAP17, AMOT, PALS1, INADL/PATJ and PARD3/PAR3. Forms a heterotrimeric complex composed of MMP5, LIN7B and PATJ; the N-terminal L27 domain of PALS1 interacts with the L27 domain of PATJ and the C-terminal L27 domain of PALS1 interacts with the L27 domain of LIN7B. Component of a complex composed of CRB3, PALS1 and PATJ. As part of the Crumbs complex; interacts with WWP1, the interaction is enhanced by AMOTL2 and facilitates WWP1 localization to the plasma membrane. The Crumbs complex promotes monoubiquitination of AMOTL2 by WWP1, which activates the Hippo signaling pathway. Interacts (via N-terminus) with PALS1/PALS (via PDZ domain). Interacts with TJP3/ZO-3 and CLDN1/claudin-1. Interacts with ASIC3, KCNJ10, KCNJ15, GRIN2A, GRIN2B, GRIN2C, GRIN2D, NLGN2, and HTR2A. Interacts with MPP7. Directly interacts with HTR4. Interacts (via PDZ domain 8) with WWC1 (via the ADDV motif). Interacts with SLC6A4. Interacts (via C-terminus) with ARHGEF18. Interacts with NPHP1. Interacts with PARD3/PAR3. Interacts (via PDZ1-6 domains) with TJP1/ZO1; the interaction is required for attachment and extension of TJP1/ZO1 condensates along the apical cell interface. As to expression, abundantly expressed in germ cells, also expressed in testes and seminiferous tubules, with faint expression in Sertoli cells (at protein level).

It is found in the cell junction. The protein resides in the tight junction. It localises to the apical cell membrane. Its subcellular location is the cytoplasm. The protein localises to the perinuclear region. Functionally, scaffolding protein that facilitates the localization of proteins to the cell membrane. Required for the correct formation of tight junctions and epithelial apico-basal polarity. Acts (via its L27 domain) as an apical connector and elongation factor for multistranded TJP1/ZO1 condensates that form a tight junction belt, thereby required for the formation of the tight junction-mediated cell barrier. Positively regulates epithelial cell microtubule elongation and cell migration, possibly via facilitating localization of PRKCI/aPKC and PAR3D/PAR3 at the leading edge of migrating cells. Plays a role in the correct reorientation of the microtubule-organizing center during epithelial migration. May regulate the surface expression and/or function of ASIC3 in sensory neurons. May recruit ARHGEF18 to apical cell-cell boundaries. In Rattus norvegicus (Rat), this protein is InaD-like protein.